A 117-amino-acid polypeptide reads, in one-letter code: Ribonuclease P protein component (117 aa).

This sequence belongs to the RnpA family. As to quaternary structure, consists of a catalytic RNA component (M1 or rnpB) and a protein subunit.

The enzyme catalyses Endonucleolytic cleavage of RNA, removing 5'-extranucleotides from tRNA precursor.. Its function is as follows. RNaseP catalyzes the removal of the 5'-leader sequence from pre-tRNA to produce the mature 5'-terminus. It can also cleave other RNA substrates such as 4.5S RNA. The protein component plays an auxiliary but essential role in vivo by binding to the 5'-leader sequence and broadening the substrate specificity of the ribozyme. The protein is Ribonuclease P protein component of Lactococcus lactis subsp. lactis (strain IL1403) (Streptococcus lactis).